Reading from the N-terminus, the 406-residue chain is Argininosuccinate synthase (406 aa).

ATP-binding positions include 14–22 (AYSGGLDTS) and Ala41. Residues Tyr92 and Ser97 each contribute to the L-citrulline site. Gly122 is an ATP binding site. Residues Thr124, Asn128, and Asp129 each contribute to the L-aspartate site. Asn128 provides a ligand contact to L-citrulline. The L-citrulline site is built by Arg132, Ser181, Ser190, Glu266, and Tyr278.

It belongs to the argininosuccinate synthase family. Type 1 subfamily. In terms of assembly, homotetramer.

Its subcellular location is the cytoplasm. The catalysed reaction is L-citrulline + L-aspartate + ATP = 2-(N(omega)-L-arginino)succinate + AMP + diphosphate + H(+). The protein operates within amino-acid biosynthesis; L-arginine biosynthesis; L-arginine from L-ornithine and carbamoyl phosphate: step 2/3. The protein is Argininosuccinate synthase of Geobacter metallireducens (strain ATCC 53774 / DSM 7210 / GS-15).